A 274-amino-acid chain; its full sequence is HTH-type transcriptional regulator GadX (274 aa).

Residues 145–242 (TRVCTVINNN…GMTPTEYQER (98 aa)) enclose the HTH araC/xylS-type domain. 2 DNA-binding regions (H-T-H motif) span residues 162 to 183 (ARIA…REEE) and 209 to 232 (IKRV…RNYY).

As to quaternary structure, homodimer.

Its function is as follows. Positively regulates the expression of about fifteen genes involved in acid resistance such as gadA, gadB and gadC. Depending on the conditions (growth phase and medium), can repress gadW. The polypeptide is HTH-type transcriptional regulator GadX (gadX) (Escherichia coli (strain K12)).